The chain runs to 97 residues: C-C motif chemokine 8 (97 aa).

The signal sequence occupies residues Met-1–Thr-23. 2 disulfide bridges follow: Cys-32–Cys-57 and Cys-33–Cys-73.

It belongs to the intercrine beta (chemokine CC) family. As to quaternary structure, monomer or homodimer; in equilibrium.

The protein resides in the secreted. In terms of biological role, chemotactic factor that attracts monocytes. This protein can bind heparin. This is C-C motif chemokine 8 (Ccl8) from Mus musculus (Mouse).